Here is a 354-residue protein sequence, read N- to C-terminus: Hyaluronan and proteoglycan link protein 1 (354 aa).

Residues 1 to 9 constitute a propeptide that is removed on maturation; sequence MKSLLLLVL. N-linked (GlcNAc...) asparagine glycans are attached at residues Asn-21 and Asn-56. The Ig-like V-type domain occupies 38 to 152; the sequence is PRLLVEAEQA…EGLEDDTAVV (115 aa). 5 disulfide bridges follow: Cys-61–Cys-139, Cys-181–Cys-252, Cys-205–Cys-226, Cys-279–Cys-349, and Cys-304–Cys-325. Link domains lie at 159–254 and 259–351; these read VVFP…FCFT and GRFY…YCFR.

This sequence belongs to the HAPLN family.

It is found in the secreted. Its subcellular location is the extracellular space. The protein localises to the extracellular matrix. In terms of biological role, stabilizes the aggregates of proteoglycan monomers with hyaluronic acid in the extracellular cartilage matrix. In Sus scrofa (Pig), this protein is Hyaluronan and proteoglycan link protein 1 (HAPLN1).